The sequence spans 130 residues: Small ribosomal subunit protein uS9 (130 aa).

The protein belongs to the universal ribosomal protein uS9 family.

The protein is Small ribosomal subunit protein uS9 of Colwellia psychrerythraea (strain 34H / ATCC BAA-681) (Vibrio psychroerythus).